A 282-amino-acid chain; its full sequence is Probable endonuclease 4 (282 aa).

Residues H67, H107, E144, D178, H181, H215, D228, H230, and E260 each contribute to the Zn(2+) site.

Belongs to the AP endonuclease 2 family. Zn(2+) serves as cofactor.

It carries out the reaction Endonucleolytic cleavage to 5'-phosphooligonucleotide end-products.. In terms of biological role, endonuclease IV plays a role in DNA repair. It cleaves phosphodiester bonds at apurinic or apyrimidinic (AP) sites, generating a 3'-hydroxyl group and a 5'-terminal sugar phosphate. The protein is Probable endonuclease 4 of Methanoculleus marisnigri (strain ATCC 35101 / DSM 1498 / JR1).